The sequence spans 57 residues: Large ribosomal subunit protein bL32c (57 aa).

Component of the chloroplast large ribosomal subunit (LSU). Mature 70S chloroplast ribosomes of higher plants consist of a small (30S) and a large (50S) subunit. The 30S small subunit contains 1 molecule of ribosomal RNA (16S rRNA) and 24 different proteins. The 50S large subunit contains 3 rRNA molecules (23S, 5S and 4.5S rRNA) and 33 different proteins.

Its subcellular location is the plastid. The protein localises to the chloroplast. Its function is as follows. Component of the chloroplast ribosome (chloro-ribosome), a dedicated translation machinery responsible for the synthesis of chloroplast genome-encoded proteins, including proteins of the transcription and translation machinery and components of the photosynthetic apparatus. The polypeptide is Large ribosomal subunit protein bL32c (rpl32) (Spinacia oleracea (Spinach)).